A 300-amino-acid polypeptide reads, in one-letter code: 5'-adenylylsulfate reductase-like 5 (300 aa).

Residues 1–23 (MDSRVSILFVCAIAVSCFTSGSA) form the signal peptide. Residues 41–161 (FDLEAKCPPS…LIEFYEEATG (121 aa)) enclose the Thioredoxin domain. The N-linked (GlcNAc...) asparagine glycan is linked to Asn-136. The helical transmembrane segment at 202–222 (FLVLSLLFICLQMAILVFPIA) threads the bilayer.

Its subcellular location is the membrane. This Arabidopsis thaliana (Mouse-ear cress) protein is 5'-adenylylsulfate reductase-like 5 (APRL5).